The sequence spans 50 residues: Photosystem II reaction center protein M (50 aa).

A helical membrane pass occupies residues 7–27 (GFVASLLFVGIPTIFLIGLFI).

This sequence belongs to the PsbM family. In terms of assembly, PSII is composed of 1 copy each of membrane proteins PsbA, PsbB, PsbC, PsbD, PsbE, PsbF, PsbH, PsbI, PsbJ, PsbK, PsbL, PsbM, PsbT, PsbX, PsbY, Psb30/Ycf12, peripheral proteins PsbO, CyanoQ (PsbQ), PsbU, PsbV and a large number of cofactors. It forms dimeric complexes.

The protein resides in the cellular thylakoid membrane. In terms of biological role, one of the components of the core complex of photosystem II (PSII). PSII is a light-driven water:plastoquinone oxidoreductase that uses light energy to abstract electrons from H(2)O, generating O(2) and a proton gradient subsequently used for ATP formation. It consists of a core antenna complex that captures photons, and an electron transfer chain that converts photonic excitation into a charge separation. This subunit is found at the monomer-monomer interface. The polypeptide is Photosystem II reaction center protein M (Prochlorococcus marinus subsp. pastoris (strain CCMP1986 / NIES-2087 / MED4)).